The following is an 883-amino-acid chain: Alanine--tRNA ligase (883 aa).

Positions 562, 566, 664, and 668 each coordinate Zn(2+).

It belongs to the class-II aminoacyl-tRNA synthetase family. In terms of assembly, homotetramer. The cofactor is Zn(2+).

It is found in the cytoplasm. It catalyses the reaction tRNA(Ala) + L-alanine + ATP = L-alanyl-tRNA(Ala) + AMP + diphosphate. In terms of biological role, catalyzes the attachment of alanine to tRNA(Ala) in a two-step reaction: alanine is first activated by ATP to form Ala-AMP and then transferred to the acceptor end of tRNA(Ala). Also edits incorrectly charged Ser-tRNA(Ala) and Gly-tRNA(Ala) via its editing domain. This Buchnera aphidicola subsp. Schizaphis graminum (strain Sg) protein is Alanine--tRNA ligase.